The chain runs to 316 residues: tRNA dimethylallyltransferase (316 aa).

Position 17–24 (17–24 (GPTASGKT)) interacts with ATP. 19-24 (TASGKT) lines the substrate pocket. Interaction with substrate tRNA regions lie at residues 42–45 (DSAL), 166–170 (QRLSR), and 247–252 (RCVGYR).

It belongs to the IPP transferase family. In terms of assembly, monomer. It depends on Mg(2+) as a cofactor.

The enzyme catalyses adenosine(37) in tRNA + dimethylallyl diphosphate = N(6)-dimethylallyladenosine(37) in tRNA + diphosphate. In terms of biological role, catalyzes the transfer of a dimethylallyl group onto the adenine at position 37 in tRNAs that read codons beginning with uridine, leading to the formation of N6-(dimethylallyl)adenosine (i(6)A). The protein is tRNA dimethylallyltransferase of Klebsiella pneumoniae (strain 342).